We begin with the raw amino-acid sequence, 256 residues long: Indole-3-glycerol phosphate synthase (256 aa).

It belongs to the TrpC family.

It catalyses the reaction 1-(2-carboxyphenylamino)-1-deoxy-D-ribulose 5-phosphate + H(+) = (1S,2R)-1-C-(indol-3-yl)glycerol 3-phosphate + CO2 + H2O. It participates in amino-acid biosynthesis; L-tryptophan biosynthesis; L-tryptophan from chorismate: step 4/5. This Chlorobaculum tepidum (strain ATCC 49652 / DSM 12025 / NBRC 103806 / TLS) (Chlorobium tepidum) protein is Indole-3-glycerol phosphate synthase.